The primary structure comprises 239 residues: 7-cyano-7-deazaguanine synthase (239 aa).

ATP is bound at residue 8-18 (FSGGLDSTASL). 4 residues coordinate Zn(2+): Cys-194, Cys-209, Cys-212, and Cys-215.

Belongs to the QueC family.

It carries out the reaction 7-carboxy-7-deazaguanine + NH4(+) + ATP = 7-cyano-7-deazaguanine + ADP + phosphate + H2O + H(+). The protein operates within purine metabolism; 7-cyano-7-deazaguanine biosynthesis. In terms of biological role, catalyzes the ATP-dependent conversion of 7-carboxy-7-deazaguanine (CDG) to 7-cyano-7-deazaguanine (preQ(0)). The protein is 7-cyano-7-deazaguanine synthase of Pyrococcus abyssi (strain GE5 / Orsay).